Here is a 1707-residue protein sequence, read N- to C-terminus: MSISVSSQRVAVSNLYTNGSEESVKAIKELKSKRLLETETRLDGLFDYYIPDTLREILTGYGMEFSVHSFQGHAHPVSKMIENHMLYRVAPNYFSSNTLVVSCKESKIKRLRLKNANNRNLNFTQYNRLVHANHHHRYENAFRELDVGNLTNLINKEDQSECIFIHDEVQYWSLDEMQRFLGSLSKVDRVVYSIIYPSEVEAGYSQSLFPEAYTFDLKDRRLVWYPDGKAEGAYTQPVNPWLLRCSKTEDSKGRSWTITKLQTIGAHHLFSAIKGSYLTEESYKYDNFTIINPNDVLKGKRGGKPLYLRARMIKPTLLYLLALKKSDSNSAVAKLRMLSSREENMDEALFVAQLAKQIKDTALYDKMGNPNLRSILSESFYDIAGSLFTRLFNRPEYDARCLEKFIRSCETTEIHVERRYMEGIRRGASFKVQNVMDWVEDDSANALSEVNFLDISWNDRVSEPYGIECIHGEGSRIRVPLSRILRAHELIAGVQTDVEINFPRYVCSSRALIHFRQYLIKLGRFSFMESRAIKDIEDIQAGLEEGVITEEEAELRLLPTTKPKITEIHMDDDTPGTSGESDVEKFKSVRSLCREEIYSEKLKGREVAFYSRHSKEYKYNGGSHRSLGWDEALNELTQELGLDDSYDHCLIQRYTAGGSIGFHADDEPCYLPGGSVVTVNLHGDATFEVKENQSGKIEKKELHDGDVYVMGPGMQQTHKHRVTSHTDGRCSITLRNKTVDYEARKGDEDSEYEEDKAELDEGIDYLQKNQGNMCSLKAFADHMQLSTPSVIAIVNGASPQTLREIEDGGYSLATLVNLSKALDFPIAIHGERGYAETPGSYRRLHLKITSGHVEPFEGVTSKGGFREAMLLGDGVGVGHFRVDKAKADRLAQSFYNGNTGVLLGKYNKGKMHTGEIEEPKEVLTAFGFAGSGKSHWCQTILKHCSVEKVLVISPRKVLRDDWVAKISKKHRVVTFEVAFMDDYGCKDIVIDEIGLLPPGYIDLVIAAHQPRTLVLLGDPLQSTYHSKRDNVVLEASQEDVFNRVRGKLPYLCYSHRLPRNCKLFEIECMGAESEKRVVYRSNRLKDEPTICATRAMKEEKGSGWYTVSETQGLSFKSCLIYLDEHWAKKEDEDVMVALTRSRGEIGIHVTPALKKKLITNAKSTLLKKVLKGETYRRSEIVAMVRKHIPETTVLFEESRLAETVDYEARLAGDPYLKSLLALYDEIEMEDIEIEEPVTLEPTKTHLALSTKMNELAPFDLKAKEHREQHTEAGRTEQIDENGYQGEVGDPMTHKALYLRHTSDDTATFMMSVKKRLRFRNYEANRRKYKTCHGIGHQMFSVFKDTYQLKEIDSLPELERCEMEFMKKRIEKSTGLIEKHAGRSDPDWPSNYLKIFLKQQTCTKMEKRGVDAKAGQTIACFAHSVLCRFGPILRQTEKALRELLPEKLMIYSQKKYMDLDKWAKTWVESMMGTDSDYEAFDRSQDEKVLDLEVEVLRFFLWPEDLIREYEELKLMMGCALGDLAVMRFSGEFGTFFFNTVCNMVFSCMRYHIDRNTPMCFAGDDMYSPGILRVKKDYEATLDQLTLKAKVHISEEPLFCGWRMSPFGIIKEPNLILDRWKIALRSGNLSLCLVNYAIEASFGYRLSEHLYDVNIDVDAQQELVREIVIKKHLLPKKISDLFSEDECERHSDGDEDFLSNDVARLYRIE.

One can recognise an Alphavirus-like MT domain in the interval 66-242 (SVHSFQGHAH…AYTQPVNPWL (177 aa)). One can recognise a Fe2OG dioxygenase domain in the interval 645–738 (SYDHCLIQRY…RCSITLRNKT (94 aa)). The Fe cation site is built by His663, Asp665, and His720. Arg729 lines the 2-oxoglutarate pocket. One can recognise a (+)RNA virus helicase ATP-binding domain in the interval 892 to 1051 (QSFYNGNTGV…NRVRGKLPYL (160 aa)). Residues 1052 to 1182 (CYSHRLPRNC…ETYRRSEIVA (131 aa)) form the (+)RNA virus helicase C-terminal domain. Residues 1469-1580 (MMGTDSDYEA…RVKKDYEATL (112 aa)) form the RdRp catalytic domain.

It belongs to the potexviruses/carlaviruses RNA replication protein family. Fe(2+) is required as a cofactor.

The enzyme catalyses RNA(n) + a ribonucleoside 5'-triphosphate = RNA(n+1) + diphosphate. The catalysed reaction is ATP + H2O = ADP + phosphate + H(+). Functionally, RNA replication. The central part of this protein possibly functions as an ATP-binding helicase. The polypeptide is RNA replication protein (Grapevine virus A (isolate Is 151) (GVA)).